The primary structure comprises 278 residues: Myb/SANT-like DNA-binding domain-containing protein 1 (278 aa).

Residues Arg44 to Ile131 form the Myb-like domain. A disordered region spans residues Cys139–Thr167. Polar residues predominate over residues Pro149–Ser166.

This Mus musculus (Mouse) protein is Myb/SANT-like DNA-binding domain-containing protein 1 (Msantd1).